A 282-amino-acid polypeptide reads, in one-letter code: Pantothenate synthetase (282 aa).

Residue 30-37 (MGNLHLGH) participates in ATP binding. His37 serves as the catalytic Proton donor. (R)-pantoate is bound at residue Gln61. Gln61 serves as a coordination point for beta-alanine. 149–152 (GQKD) contributes to the ATP binding site. Gln155 is a (R)-pantoate binding site. Residues Ile178 and 186-189 (MSSR) contribute to the ATP site.

It belongs to the pantothenate synthetase family. As to quaternary structure, homodimer.

It localises to the cytoplasm. It catalyses the reaction (R)-pantoate + beta-alanine + ATP = (R)-pantothenate + AMP + diphosphate + H(+). The protein operates within cofactor biosynthesis; (R)-pantothenate biosynthesis; (R)-pantothenate from (R)-pantoate and beta-alanine: step 1/1. Functionally, catalyzes the condensation of pantoate with beta-alanine in an ATP-dependent reaction via a pantoyl-adenylate intermediate. The sequence is that of Pantothenate synthetase from Shewanella piezotolerans (strain WP3 / JCM 13877).